A 447-amino-acid chain; its full sequence is Tubulin beta chain (447 aa).

Residues glutamine 11, glutamate 69, serine 138, glycine 142, threonine 143, glycine 144, asparagine 204, and asparagine 226 each contribute to the GTP site. Glutamate 69 provides a ligand contact to Mg(2+).

Belongs to the tubulin family. Dimer of alpha and beta chains. A typical microtubule is a hollow water-filled tube with an outer diameter of 25 nm and an inner diameter of 15 nM. Alpha-beta heterodimers associate head-to-tail to form protofilaments running lengthwise along the microtubule wall with the beta-tubulin subunit facing the microtubule plus end conferring a structural polarity. Microtubules usually have 13 protofilaments but different protofilament numbers can be found in some organisms and specialized cells. The cofactor is Mg(2+).

The protein localises to the cytoplasm. The protein resides in the cytoskeleton. Its function is as follows. Tubulin is the major constituent of microtubules, a cylinder consisting of laterally associated linear protofilaments composed of alpha- and beta-tubulin heterodimers. Microtubules grow by the addition of GTP-tubulin dimers to the microtubule end, where a stabilizing cap forms. Below the cap, tubulin dimers are in GDP-bound state, owing to GTPase activity of alpha-tubulin. This is Tubulin beta chain (TUB2) from Penicillium digitatum (Green mold).